A 208-amino-acid chain; its full sequence is Calcyphosin-like protein (208 aa).

EF-hand domains are found at residues 39–74 (AGIK…YAVV), 75–110 (MEKE…PMSR), 111–146 (ARKE…KHHP), and 154–191 (SEEQ…VSAS). Residues aspartate 52, aspartate 54, asparagine 56, threonine 58, glutamate 63, aspartate 88, aspartate 90, asparagine 92, threonine 94, and glutamate 99 each contribute to the Ca(2+) site.

It is found in the cytoplasm. The protein is Calcyphosin-like protein (CAPSL) of Homo sapiens (Human).